The chain runs to 537 residues: Chaperonin GroEL 2 (537 aa).

ATP is bound by residues 29 to 32 (TLGP), 86 to 90 (DGTTT), Gly-413, 477 to 479 (NAA), and Asp-493.

The protein belongs to the chaperonin (HSP60) family. In terms of assembly, forms a cylinder of 14 subunits composed of two heptameric rings stacked back-to-back. Interacts with the co-chaperonin GroES.

It localises to the cytoplasm. The catalysed reaction is ATP + H2O + a folded polypeptide = ADP + phosphate + an unfolded polypeptide.. Together with its co-chaperonin GroES, plays an essential role in assisting protein folding. The GroEL-GroES system forms a nano-cage that allows encapsulation of the non-native substrate proteins and provides a physical environment optimized to promote and accelerate protein folding. The sequence is that of Chaperonin GroEL 2 from Thermobifida fusca (strain YX).